A 784-amino-acid chain; its full sequence is Copal-8-ol diphosphate hydratase TPSSA9, chloroplastic (784 aa).

Arg240 contributes to the substrate binding site. Mg(2+) is bound by residues Asp372 and Asp374. The short motif at 372 to 375 (DIDD) is the DXDD motif element. A substrate-binding site is contributed by Arg459.

Belongs to the terpene synthase family.

It is found in the plastid. The protein resides in the chloroplast. It carries out the reaction (2E,6E,10E)-geranylgeranyl diphosphate + H2O = 8-hydroxycopalyl diphosphate. It participates in secondary metabolite biosynthesis; terpenoid biosynthesis. Its function is as follows. Involved in the biosynthesis of labdane-type diterpenoid including sclareol, a diterpene-diol that is used as fragrance and flavoring, and has anticancer effects (able to kill leukemic and colon cancer cells by apoptosis). Sclareol can also be used as synthesis precursor of ambergris substitution fragance products such as ambrox. Terpene synthase that produces 8-hydroxycopalyl diphosphate from geranylgeranyl diphosphate (GGPP). In Salvia sclarea (Clary sage), this protein is Copal-8-ol diphosphate hydratase TPSSA9, chloroplastic.